The chain runs to 211 residues: Ribosomal RNA large subunit methyltransferase E (211 aa).

Positions 60, 62, 80, 96, and 121 each coordinate S-adenosyl-L-methionine. The Proton acceptor role is filled by lysine 161.

Belongs to the class I-like SAM-binding methyltransferase superfamily. RNA methyltransferase RlmE family.

Its subcellular location is the cytoplasm. The enzyme catalyses uridine(2552) in 23S rRNA + S-adenosyl-L-methionine = 2'-O-methyluridine(2552) in 23S rRNA + S-adenosyl-L-homocysteine + H(+). Specifically methylates the uridine in position 2552 of 23S rRNA at the 2'-O position of the ribose in the fully assembled 50S ribosomal subunit. This Cellvibrio japonicus (strain Ueda107) (Pseudomonas fluorescens subsp. cellulosa) protein is Ribosomal RNA large subunit methyltransferase E.